The primary structure comprises 452 residues: Lichenan permease IIC component (452 aa).

One can recognise a PTS EIIC type-3 domain in the interval 8–421 (LEEKVMPIAG…AVSFVVYYPF (414 aa)). Helical transmembrane passes span 31–51 (GIILTMPLIIIGSFFLIIGNL), 72–92 (LAYPVDATFEIMGLVAAFGIA), 104–124 (LSAGAISLAAFLLATPYQVPF), 138–158 (GIPLSLMGSKGLFVAMIIAMV), 187–207 (FVALIPGFAVIFLIWAARLIV), 218–238 (IVSVLLGTPLSILGGSLGGSL), 246–266 (LLWACGLHGANIVGGVMAPIW), 291–311 (FFDIWVNIGGSGATLALVVTM), 351–373 (LLLPFIITPLVTVTLTYIGMSTG), and 402–422 (SGAVMQAINIAVSFVVYYPFF).

The protein resides in the cell membrane. The phosphoenolpyruvate-dependent sugar phosphotransferase system (PTS), a major carbohydrate active -transport system, catalyzes the phosphorylation of incoming sugar substrates concomitant with their translocation across the cell membrane. This system is involved in lichenan transport. The chain is Lichenan permease IIC component (licC) from Bacillus subtilis (strain 168).